The sequence spans 286 residues: Large ribosomal subunit protein uL4m (286 aa).

Residues 1–26 constitute a mitochondrion transit peptide; that stretch reads MTIKRNLVKTLQSIRYQATTATAHAE. The disordered stretch occupies residues 85–132; that stretch reads RRVGASNPPGRSENGFSRRKLMPQKGSGRARVGDANSPTRHNGGRALA.

This sequence belongs to the universal ribosomal protein uL4 family. In terms of assembly, component of the mitochondrial large ribosomal subunit (mt-LSU). Mature yeast 74S mitochondrial ribosomes consist of a small (37S) and a large (54S) subunit. The 37S small subunit contains a 15S ribosomal RNA (15S mt-rRNA) and 34 different proteins. The 54S large subunit contains a 21S rRNA (21S mt-rRNA) and 46 different proteins.

The protein resides in the mitochondrion. Component of the mitochondrial ribosome (mitoribosome), a dedicated translation machinery responsible for the synthesis of mitochondrial genome-encoded proteins, including at least some of the essential transmembrane subunits of the mitochondrial respiratory chain. The mitoribosomes are attached to the mitochondrial inner membrane and translation products are cotranslationally integrated into the membrane. The polypeptide is Large ribosomal subunit protein uL4m (YML6) (Saccharomyces cerevisiae (strain ATCC 204508 / S288c) (Baker's yeast)).